The following is a 339-amino-acid chain: D-erythrose-4-phosphate dehydrogenase (339 aa).

12 to 13 serves as a coordination point for NAD(+); sequence RI. Substrate contacts are provided by residues 154 to 156, Arg200, 213 to 214, and Arg236; these read SCT and TK. Catalysis depends on Cys155, which acts as the Nucleophile. Residue Asn318 participates in NAD(+) binding.

Belongs to the glyceraldehyde-3-phosphate dehydrogenase family. Epd subfamily. In terms of assembly, homotetramer.

Its subcellular location is the cytoplasm. The enzyme catalyses D-erythrose 4-phosphate + NAD(+) + H2O = 4-phospho-D-erythronate + NADH + 2 H(+). It participates in cofactor biosynthesis; pyridoxine 5'-phosphate biosynthesis; pyridoxine 5'-phosphate from D-erythrose 4-phosphate: step 1/5. Functionally, catalyzes the NAD-dependent conversion of D-erythrose 4-phosphate to 4-phosphoerythronate. The polypeptide is D-erythrose-4-phosphate dehydrogenase (Enterobacter sp. (strain 638)).